The primary structure comprises 310 residues: HPr kinase/phosphorylase (310 aa).

Active-site residues include His-138 and Lys-159. Gly-153 to Ser-160 serves as a coordination point for ATP. Ser-160 is a binding site for Mg(2+). Asp-177 serves as the catalytic Proton acceptor; for phosphorylation activity. Proton donor; for dephosphorylation activity. The important for the catalytic mechanism of both phosphorylation and dephosphorylation stretch occupies residues Leu-201–Asn-210. Position 202 (Glu-202) interacts with Mg(2+). Residue Arg-243 is part of the active site. Positions Pro-264–Arg-269 are important for the catalytic mechanism of dephosphorylation.

Belongs to the HPrK/P family. As to quaternary structure, homohexamer. The cofactor is Mg(2+).

The catalysed reaction is [HPr protein]-L-serine + ATP = [HPr protein]-O-phospho-L-serine + ADP + H(+). The enzyme catalyses [HPr protein]-O-phospho-L-serine + phosphate + H(+) = [HPr protein]-L-serine + diphosphate. Catalyzes the ATP- as well as the pyrophosphate-dependent phosphorylation of a specific serine residue in HPr, a phosphocarrier protein of the phosphoenolpyruvate-dependent sugar phosphotransferase system (PTS). HprK/P also catalyzes the pyrophosphate-producing, inorganic phosphate-dependent dephosphorylation (phosphorolysis) of seryl-phosphorylated HPr (P-Ser-HPr). The two antagonistic activities of HprK/P are regulated by several intracellular metabolites, which change their concentration in response to the absence or presence of rapidly metabolisable carbon sources (glucose, fructose, etc.) in the growth medium. Also phosphorylates/dephosphorylates the HPr-like catabolite repression protein crh on a specific serine residue. Therefore, by controlling the phosphorylation state of HPr and crh, HPrK/P is a sensor enzyme that plays a major role in the regulation of carbon metabolism and sugar transport: it mediates carbon catabolite repression (CCR), and regulates PTS-catalyzed carbohydrate uptake and inducer exclusion. In Bacillus pumilus (strain SAFR-032), this protein is HPr kinase/phosphorylase.